The primary structure comprises 341 residues: Pyrophosphate--fructose 6-phosphate 1-phosphotransferase (341 aa).

Residue G10 coordinates diphosphate. E103 is a Mg(2+) binding site. Substrate contacts are provided by residues 125–127 (TID), R162, 169–171 (MGR), E221, R265, and 271–274 (HVQR). Catalysis depends on D127, which acts as the Proton acceptor.

Belongs to the phosphofructokinase type A (PFKA) family. Mixed-substrate PFK group III subfamily. Homodimer or homotetramer. Mg(2+) serves as cofactor.

Its subcellular location is the cytoplasm. It carries out the reaction beta-D-fructose 6-phosphate + diphosphate = beta-D-fructose 1,6-bisphosphate + phosphate + H(+). Its pathway is carbohydrate degradation; glycolysis; D-glyceraldehyde 3-phosphate and glycerone phosphate from D-glucose: step 3/4. Non-allosteric. Its function is as follows. Catalyzes the phosphorylation of D-fructose 6-phosphate, the first committing step of glycolysis. Uses inorganic phosphate (PPi) as phosphoryl donor instead of ATP like common ATP-dependent phosphofructokinases (ATP-PFKs), which renders the reaction reversible, and can thus function both in glycolysis and gluconeogenesis. Consistently, PPi-PFK can replace the enzymes of both the forward (ATP-PFK) and reverse (fructose-bisphosphatase (FBPase)) reactions. This is Pyrophosphate--fructose 6-phosphate 1-phosphotransferase from Amycolatopsis mediterranei (strain S699) (Nocardia mediterranei).